The primary structure comprises 81 residues: GEAVGLPAQQMGNSEVGHLNLGAGRVVHQSLTYINRKIKDGSFFKNKCFLKVIQHVKTNKSKLHLLGLVSDGGVHSHLDHF.

The active-site Phosphoserine intermediate is Ser-14. Residue Ser-14 participates in Mn(2+) binding. His-75 serves as a coordination point for substrate.

Belongs to the BPG-independent phosphoglycerate mutase family. Monomer. Requires Mn(2+) as cofactor.

The catalysed reaction is (2R)-2-phosphoglycerate = (2R)-3-phosphoglycerate. It functions in the pathway carbohydrate degradation; glycolysis; pyruvate from D-glyceraldehyde 3-phosphate: step 3/5. Catalyzes the interconversion of 2-phosphoglycerate and 3-phosphoglycerate. In Tomato big bud phytoplasma, this protein is 2,3-bisphosphoglycerate-independent phosphoglycerate mutase (gpmI).